A 315-amino-acid polypeptide reads, in one-letter code: CRISPR-associated endonuclease Cas1 1 (315 aa).

Glu-144, His-208, and Glu-223 together coordinate Mn(2+).

It belongs to the CRISPR-associated endonuclease Cas1 family. In terms of assembly, homodimer, forms a heterotetramer with a Cas2 homodimer. Mg(2+) is required as a cofactor. The cofactor is Mn(2+).

Its function is as follows. CRISPR (clustered regularly interspaced short palindromic repeat), is an adaptive immune system that provides protection against mobile genetic elements (viruses, transposable elements and conjugative plasmids). CRISPR clusters contain spacers, sequences complementary to antecedent mobile elements, and target invading nucleic acids. CRISPR clusters are transcribed and processed into CRISPR RNA (crRNA). Acts as a dsDNA endonuclease. Involved in the integration of spacer DNA into the CRISPR cassette. This Thermus thermophilus (strain ATCC 27634 / DSM 579 / HB8) protein is CRISPR-associated endonuclease Cas1 1.